The following is a 363-amino-acid chain: Fructose-bisphosphate aldolase (363 aa).

Residues Arg-56 and Lys-147 each contribute to the substrate site. Glu-188 (proton acceptor) is an active-site residue. Lys-230 acts as the Schiff-base intermediate with dihydroxyacetone-P in catalysis.

Belongs to the class I fructose-bisphosphate aldolase family.

It carries out the reaction beta-D-fructose 1,6-bisphosphate = D-glyceraldehyde 3-phosphate + dihydroxyacetone phosphate. It participates in carbohydrate degradation; glycolysis; D-glyceraldehyde 3-phosphate and glycerone phosphate from D-glucose: step 4/4. This Schistosoma mansoni (Blood fluke) protein is Fructose-bisphosphate aldolase.